We begin with the raw amino-acid sequence, 415 residues long: MAIKKRSATVVHGASGAAAAVKNPQASKSSFWGELPQHVMSGISRMVPTLIMGGVILAFSQLIAYSWLKIPADIGIMDALNSGKFSGFDLSLLKFAWLSQSFGGVLFGFAIPMFAAFVANSIGGKLAFPAGFIGGLMSTQPTQLLNFDPSTMQWATSSPVPSTFIGALIISIVAGYLVKWMNQKIQLPDFLLAFKTTFLLPILSAIFVMLAMYYVITPFGGWINGGIRTVLTAAGEKGALMYAMGIAAATAIDLGGPINKAAGFVAFSFTTDHVLPVTARSIAIVIPPIGLGLATIIDRRLTGKRLFNAQLYPQGKTAMFLAFMGISEGAIPFALESPITAIPSYMVGAIVGSTAAVWLGAVQWFPESAIWAWPLVTNLGVYMAGIALGAIITALMVVFLRLMMFRKGKLLIESL.

Topologically, residues 1–46 are cytoplasmic; it reads MAIKKRSATVVHGASGAAAAVKNPQASKSSFWGELPQHVMSGISRM. The 381-residue stretch at 35–415 folds into the PTS EIIC type-2 domain; the sequence is LPQHVMSGIS…RKGKLLIESL (381 aa). The helical transmembrane segment at 47–67 threads the bilayer; the sequence is VPTLIMGGVILAFSQLIAYSW. The Periplasmic segment spans residues 68–101; the sequence is LKIPADIGIMDALNSGKFSGFDLSLLKFAWLSQS. Residues 102-122 form a helical membrane-spanning segment; that stretch reads FGGVLFGFAIPMFAAFVANSI. Residues 123–126 are Cytoplasmic-facing; it reads GGKL. A helical transmembrane segment spans residues 127-147; the sequence is AFPAGFIGGLMSTQPTQLLNF. Residues 148–157 lie on the Periplasmic side of the membrane; sequence DPSTMQWATS. Residues 158 to 178 form a helical membrane-spanning segment; sequence SPVPSTFIGALIISIVAGYLV. The Cytoplasmic segment spans residues 179–197; the sequence is KWMNQKIQLPDFLLAFKTT. Residues 198 to 218 form a helical membrane-spanning segment; sequence FLLPILSAIFVMLAMYYVITP. Topologically, residues 219 to 237 are periplasmic; that stretch reads FGGWINGGIRTVLTAAGEK. Residues 238-258 form a helical membrane-spanning segment; sequence GALMYAMGIAAATAIDLGGPI. The Cytoplasmic segment spans residues 259-276; sequence NKAAGFVAFSFTTDHVLP. A helical membrane pass occupies residues 277–297; it reads VTARSIAIVIPPIGLGLATII. Residues 298–318 are Periplasmic-facing; the sequence is DRRLTGKRLFNAQLYPQGKTA. Residues 319-339 form a helical membrane-spanning segment; the sequence is MFLAFMGISEGAIPFALESPI. Over 340–341 the chain is Cytoplasmic; sequence TA. The helical transmembrane segment at 342 to 362 threads the bilayer; sequence IPSYMVGAIVGSTAAVWLGAV. Topologically, residues 363–378 are periplasmic; sequence QWFPESAIWAWPLVTN. The helical transmembrane segment at 379–399 threads the bilayer; the sequence is LGVYMAGIALGAIITALMVVF. At 400–415 the chain is on the cytoplasmic side; the sequence is LRLMMFRKGKLLIESL.

Its subcellular location is the cell inner membrane. Its function is as follows. The phosphoenolpyruvate-dependent sugar phosphotransferase system (PTS), a major carbohydrate active -transport system, catalyzes the phosphorylation of incoming sugar substrates concomitant with their translocation across the cell membrane. The chain is Fructose-like permease IIC component (fryC) from Escherichia coli O6:H1 (strain CFT073 / ATCC 700928 / UPEC).